The sequence spans 416 residues: MDKLLIRGGKPLNGPIRVSGSKNAALPILLAAPLLTEKTVVDNVPRLRDIHTTLKLNEILGCPSTFEGNTVTMEPAANLNPEAPYDLVRTMRASVLVLGPLLARTGRARVALPGGCAIGARPVNLHLTALEKMGATFTLEAGYIEGRCDRLTGAHIVFDFPTVGGTENLLMAASLAEGTTILENAAREPEVADLADFLNAMGAKITGHGTSVITIEGVPSLGGGRYSVMPDRIEAATYMIAAAITGGELHLECCPFMELDAVVSKLREMGVVIEATNAGVAVRRQGQLVGVDVATQVYPGFPTDVQAQIMALMCVAVGSSSIRETIFENRFMHVQELVRLGAQIRISSQTAFIRGVGTLTGAPVMASDLRASASLVLAGLAAKGETLIQRVYHLDRGYEAMEVKLQNVGADIERLT.

Residue 22-23 participates in phosphoenolpyruvate binding; the sequence is KN. Residue arginine 92 participates in UDP-N-acetyl-alpha-D-glucosamine binding. Cysteine 116 (proton donor) is an active-site residue. Cysteine 116 bears the 2-(S-cysteinyl)pyruvic acid O-phosphothioketal mark. UDP-N-acetyl-alpha-D-glucosamine contacts are provided by aspartate 304 and isoleucine 326.

Belongs to the EPSP synthase family. MurA subfamily.

Its subcellular location is the cytoplasm. It carries out the reaction phosphoenolpyruvate + UDP-N-acetyl-alpha-D-glucosamine = UDP-N-acetyl-3-O-(1-carboxyvinyl)-alpha-D-glucosamine + phosphate. The protein operates within cell wall biogenesis; peptidoglycan biosynthesis. Its function is as follows. Cell wall formation. Adds enolpyruvyl to UDP-N-acetylglucosamine. This is UDP-N-acetylglucosamine 1-carboxyvinyltransferase from Solidesulfovibrio magneticus (strain ATCC 700980 / DSM 13731 / RS-1) (Desulfovibrio magneticus).